A 375-amino-acid polypeptide reads, in one-letter code: MQCALYDAGRCRSCQWITQPIPEQLSAKTADLKNLLADFPVEEWCAPVSGPEQGFRNKAKMVVSGSVEKPLLGMLHRDGTPEDLCDCPLYPASFAPVFAALKPFIARAGLTPYNVARKRGELKYILLTESQSDGGMMLRFVLRSDTKLAQLRKALPWLQEQLPQLKVITVNIQPVHMAIMEGETEIYLTEQQALAERFNDVPLWIRPQSFFQTNPAVASQLYATARDWVRQLPIKHMWDLFCGVGGFGLHCATPDMQLTGIEIAPEAIACAKQSAAELGLTRLQFQALDSTQFASAQGEVPELVLVNPPRRGIGKPLCDYLSTMAPRFIIYSSCNAQTMAKDIRELPGYRIERVQLFDMFPHTAHYEVLTLLVKQ.

Cys-3, Cys-11, Cys-14, and Cys-87 together coordinate [4Fe-4S] cluster. S-adenosyl-L-methionine contacts are provided by Gln-212, Phe-241, Glu-262, and Asn-307. Cys-334 functions as the Nucleophile in the catalytic mechanism.

It belongs to the class I-like SAM-binding methyltransferase superfamily. RNA M5U methyltransferase family. RlmC subfamily.

The enzyme catalyses uridine(747) in 23S rRNA + S-adenosyl-L-methionine = 5-methyluridine(747) in 23S rRNA + S-adenosyl-L-homocysteine + H(+). In terms of biological role, catalyzes the formation of 5-methyl-uridine at position 747 (m5U747) in 23S rRNA. This Escherichia coli O7:K1 (strain IAI39 / ExPEC) protein is 23S rRNA (uracil(747)-C(5))-methyltransferase RlmC.